The sequence spans 209 residues: uncharacterized protein (209 aa).

Residues 1 to 17 (MKRLVTGLLALSLFLAA) form the signal peptide. Positions 17 to 105 (ACGQDSDQQK…SNNQANNNQK (89 aa)) are disordered. C18 carries N-palmitoyl cysteine lipidation. The S-diacylglycerol cysteine moiety is linked to residue C18. Residues 23 to 70 (DQQKDSNKEKDDKAKTEQQDEKTNDSSKDKKDKKDDSKDVNKDNKDNS) show a composition bias toward basic and acidic residues. Residues 71–105 (ANDNQQQSNSNATNNDQNQTNNNQSSNNQANNNQK) show a composition bias toward low complexity.

Its subcellular location is the cell membrane. This is an uncharacterized protein from Staphylococcus aureus (strain bovine RF122 / ET3-1).